The following is a 38-amino-acid chain: Mu-agatoxin-Hc1c (38 aa).

4 cysteine pairs are disulfide-bonded: Cys3/Cys19, Cys10/Cys24, Cys18/Cys34, and Cys26/Cys32. Ser38 bears the Serine amide mark.

It belongs to the neurotoxin 07 (Beta/delta-agtx) family. 02 (aga-3) subfamily. Expressed by the venom gland.

It localises to the secreted. Functionally, insecticidal neurotoxin that induces irreversible neuromuscular blockade in house crickets (A.domesticus). Modifies presynaptic voltage-gated sodium channels (Nav), causing them to open at the normal resting potential of the nerve. This leads to spontaneous release of neurotransmitter and repetitive action potentials in motor neurons. This Hololena curta (Funnel-web spider) protein is Mu-agatoxin-Hc1c.